The chain runs to 321 residues: Glucokinase (321 aa).

Residue 8–13 (GDVGGT) participates in ATP binding.

This sequence belongs to the bacterial glucokinase family.

It localises to the cytoplasm. The enzyme catalyses D-glucose + ATP = D-glucose 6-phosphate + ADP + H(+). This Shigella flexneri serotype 5b (strain 8401) protein is Glucokinase.